The sequence spans 319 residues: Acetyl-coenzyme A carboxylase carboxyl transferase subunit alpha (319 aa).

Residues 35 to 296 (DLDKEIKQLE…KQRLIEQLNE (262 aa)) enclose the CoA carboxyltransferase C-terminal domain.

The protein belongs to the AccA family. As to quaternary structure, acetyl-CoA carboxylase is a heterohexamer composed of biotin carboxyl carrier protein (AccB), biotin carboxylase (AccC) and two subunits each of ACCase subunit alpha (AccA) and ACCase subunit beta (AccD).

It localises to the cytoplasm. It catalyses the reaction N(6)-carboxybiotinyl-L-lysyl-[protein] + acetyl-CoA = N(6)-biotinyl-L-lysyl-[protein] + malonyl-CoA. It functions in the pathway lipid metabolism; malonyl-CoA biosynthesis; malonyl-CoA from acetyl-CoA: step 1/1. Its function is as follows. Component of the acetyl coenzyme A carboxylase (ACC) complex. First, biotin carboxylase catalyzes the carboxylation of biotin on its carrier protein (BCCP) and then the CO(2) group is transferred by the carboxyltransferase to acetyl-CoA to form malonyl-CoA. This is Acetyl-coenzyme A carboxylase carboxyl transferase subunit alpha from Aliivibrio salmonicida (strain LFI1238) (Vibrio salmonicida (strain LFI1238)).